The primary structure comprises 184 residues: UPF0301 protein Sden_2674 (184 aa).

It belongs to the UPF0301 (AlgH) family.

In Shewanella denitrificans (strain OS217 / ATCC BAA-1090 / DSM 15013), this protein is UPF0301 protein Sden_2674.